The primary structure comprises 18141 residues: Titin (18141 aa).

The segment covering 1 to 31 (MQRQNPNPYQQQNQQHQQVQQFSSQEYSHSS) has biased composition (low complexity). The disordered stretch occupies residues 1-69 (MQRQNPNPYQ…QHHGGSIGGA (69 aa)). The span at 32-47 (QEQHQEQRISRTEQHV) shows a compositional bias: basic and acidic residues. Residues 48–62 (QRSQVTTQRQVQQHH) show a composition bias toward low complexity. Ig-like domains are found at residues 86-177 (PPVF…VYIQ), 255-343 (PQIS…AVLA), 372-461 (PAFV…AQLN), 471-559 (PQFV…ARLY), 618-708 (PQFI…AILS), 751-842 (PQFI…SSIR), 890-981 (PQFK…AQLT), 1024-1115 (PRFL…ATMI), 1158-1249 (PVFV…ACVR), 1291-1381 (PQFT…CSVR), 1424-1515 (PRFL…VELQ), 1558-1643 (PVFT…EAIT), 1691-1781 (PVFT…ASLI), 1824-1917 (PVFV…LNVT), 1958-2050 (PQFG…VNVT), 2089-2180 (PIFL…CNVR), and 2222-2313 (PHFT…TNLR). The disordered stretch occupies residues 236–266 (EQDSQLSQELDRNQGPAQAPQISQKPRSSKL). Cys-393 and Cys-445 are oxidised to a cystine. Disulfide bonds link Cys-1312–Cys-1365, Cys-1446–Cys-1499, and Cys-1579–Cys-1632. An intrachain disulfide couples Cys-1846 to Cys-1899. Residues Cys-2111 and Cys-2164 are joined by a disulfide bond. A compositionally biased stretch (basic and acidic residues) spans 2338–2347 (STAPHQRQEP). Residues 2338 to 2357 (STAPHQRQEPETPGTRQRPV) form a disordered region. 3 Ig-like domains span residues 2356–2449 (PVFT…MRVV), 2488–2581 (PIFT…MKVK), and 2622–2715 (PVFT…LKIE). The segment at 2731-2750 (PRIGELEAPKEGRPEAPEPT) is disordered. A compositionally biased stretch (basic and acidic residues) spans 2734 to 2746 (GELEAPKEGRPEA). 9 Ig-like domains span residues 2754 to 2844 (PVFI…GTLK), 2891 to 2983 (PPVW…TTIF), 3029 to 3116 (PRFT…AEIS), 3130 to 3221 (PRFT…TTLN), 3263 to 3354 (PKFI…ASLK), 3401 to 3494 (PVFT…MKIQ), 3539 to 3625 (PEFI…ATVS), 3676 to 3767 (PKFT…AKVT), and 3811 to 3901 (PKFT…ATVS). A disulfide bond links Cys-2775 and Cys-2828. A disulfide bridge links Cys-3152 with Cys-3205. Intrachain disulfides connect Cys-3560/Cys-3613, Cys-3698/Cys-3751, and Cys-3832/Cys-3885. The stretch at 3910–3944 (LQNQVPRGMKRSDALTQMEATIKKYTSEVHLTEDD) is one TPR 1 repeat. 2 Ig-like domains span residues 3954 to 4047 (PRFV…IKVS) and 4092 to 4181 (PVFV…LKVV). Cys-3976 and Cys-4029 form a disulfide bridge. Positions 4204–4229 (AAYQKERQENELEKVFDERKQVLSEQ) form a coiled coil. Disordered regions lie at residues 4226-4254 (LSEQ…DWQQ) and 4299-4336 (SSQA…PSES). A compositionally biased stretch (polar residues) spans 4309-4322 (YEENLQEKTSTTEV). Ig-like domains follow at residues 4394–4482 (PVFT…ANLV), 4497–4585 (PSFV…GDCI), 4604–4692 (PHIV…AQLK), and 4703–4791 (PTIT…AKLT). One copy of the TPR 2 repeat lies at 4403–4438 (CRVFENEQAKFEVEFEGEPNPTVKWYRESFPIQNSP). Cys-4625 and Cys-4676 form a disulfide bridge. Disordered regions lie at residues 4803-4891 (RTID…DKGV), 5318-5368 (DELV…QPEP), 5413-5648 (RVIP…EVDA), 5667-5701 (IKKT…VPQK), 5718-5748 (KKTK…EVVQ), 5775-5982 (KEEE…QRLL), 6034-6350 (KRVK…MPVD), and 6364-6393 (EEEV…EASV). The segment covering 4822–4841 (PESPHAFQPGQQPGQQFGQF) has biased composition (low complexity). The segment covering 4852–4863 (GRSRQKKPKVRS) has biased composition (basic residues). Composition is skewed to basic and acidic residues over residues 5344–5357 (QPQE…HDEL), 5436–5447 (RPKEAVKAEEIQ), 5541–5552 (QKPDEQKQELPK), 5591–5621 (IEEK…EKPE), and 5633–5645 (PKSE…HPDE). Residues 5575-5613 (PVLWERKKKKPQPQDVIEEKLDVAPTKTYEKAVDVLPDE) form a TPR 3 repeat. Acidic residues predominate over residues 5681-5697 (EELFEEQPEEEISPEEE). Acidic residues-rich tracts occupy residues 5779-5792 (IPTE…ETAE) and 5818-5860 (DVEE…QDEI). The span at 5865 to 5874 (RKVKKAKKPK) shows a compositional bias: basic residues. Over residues 5883–5904 (EIEEDQPEEEVLQEEIIGEQEE) the composition is skewed to acidic residues. A compositionally biased stretch (basic residues) spans 5910 to 5920 (RKVKSIKKPKK). Basic and acidic residues predominate over residues 5921–5971 (VVTEKTVDQTEQPEKPEESQAEEVKETVTEEPKKPKPAPEEAKVEQVEKIS). Residues 6034–6043 (KRVKKKKPKT) show a composition bias toward basic residues. The span at 6049–6079 (ESTEEPAEETEEFEEEATQPEEVQPVEEIPE) shows a compositional bias: acidic residues. 6 stretches are compositionally biased toward basic and acidic residues: residues 6081 to 6092 (PQVKEVADERKT), 6099 to 6133 (RKEE…EVRL), 6141 to 6169 (IKPE…EEKR), 6195 to 6209 (EAEH…KPEE), 6217 to 6234 (KRGE…EKKW), and 6259 to 6268 (PIEEQQKPEK). The span at 6281-6290 (PESEEEELEL) shows a compositional bias: acidic residues. Residues 6291 to 6306 (EPLKLPEDKKPKEPKA) are compositionally biased toward basic and acidic residues. A compositionally biased stretch (basic residues) spans 6307 to 6318 (KKEKKKKPKLKK). Acidic residues-rich tracts occupy residues 6325 to 6349 (EVSE…EMPV) and 6364 to 6373 (EEEVVPTEET). 7 consecutive Ig-like domains span residues 6536 to 6624 (PRIT…TNII), 6633 to 6728 (PQFT…NILS), 6741 to 6830 (PTVT…VVVS), 6841 to 6929 (PRFI…ATVN), 6942 to 7034 (PRFV…VKIQ), 7066 to 7151 (PKII…VAVT), and 7189 to 7279 (PSLL…FDIS). A disulfide bond links Cys-6557 and Cys-6608. A disulfide bond links Cys-6964 and Cys-7016. The stretch at 7621 to 7663 (KIQVQTKQIAQMNTKIKKHKKHKQQEQEVSETTIQCEQKETLA) forms a coiled coil. Disordered regions lie at residues 7773–7793 (AKTA…VKAQ), 9414–9440 (EEDD…EEIQ), 9485–9510 (EEDD…PEEI), 9556–9582 (EEDD…EEIQ), 9627–9652 (EEDD…PEEI), 9698–9724 (EEDD…EEIQ), 9769–9796 (EEDD…EIQE), 9838–9865 (TAEE…PEEI), 9911–9937 (EEDD…EEIQ), 9982–10008 (EEDD…EEIQ), 10053–10080 (EEDD…EIQE), 10125–10149 (ENDK…PEEI), 10195–10220 (EEDD…PEEI), 10266–10291 (EEDD…PEEI), 10337–10364 (EEDD…EIQE), 10408–10433 (EEDD…PEEI), 10479–10504 (EEDD…PEEI), 10550–10576 (EEDD…EEIQ), 10621–10648 (EEDD…EIQE), 10692–10717 (EEDD…PEEI), 10763–10788 (EEDD…PEEI), 10834–10860 (EEDD…EEIQ), 10905–10932 (EEDD…EIQE), 11047–11073 (EEDD…EEIQ), 11118–11143 (EEDD…PEEI), 11189–11216 (EEDD…EIQE), 11260–11286 (EEDD…EEIQ), 11679–11703 (EELD…RGPD), and 11767–11795 (TEPE…LETP). The span at 7774 to 7783 (KTAESSKELP) shows a compositional bias: basic and acidic residues. Acidic residues-rich tracts occupy residues 9429 to 9440 (VPYEEEKPEEIQ), 9500 to 9510 (VPYEEEKPEEI), 9571 to 9582 (VPYEEEKPEEIQ), 9642 to 9652 (VPYEEEKPEEI), 9713 to 9724 (VPYEEEKPEEIQ), 9784 to 9796 (VPYE…EIQE), 9855 to 9865 (VPYEEEKPEEI), 9926 to 9937 (VPYEEEKPEEIQ), 9997 to 10008 (VPYEEEKPEEIQ), 10068 to 10080 (VPYE…EIQE), 10139 to 10149 (VPYEEEKPEEI), 10210 to 10220 (VPYEEEKPEEI), 10281 to 10291 (VPYEEEKPEEI), 10352 to 10364 (VPYE…EIQE), 10423 to 10433 (VPYEEEKPEEI), 10494 to 10504 (VPYEEEKPEEI), 10565 to 10576 (VPYEEEKPEEIQ), 10636 to 10648 (VPYE…EIQE), 10707 to 10717 (VPYEEEKPEEI), 10778 to 10788 (VPYEEEKPEEI), 10849 to 10860 (VPYEEEKPEEIQ), 10920 to 10932 (VPYE…EIQE), 11062 to 11073 (VPYEEEKPEEIQ), 11133 to 11143 (VPYEEEKPEEI), 11204 to 11216 (VPYE…EIQE), and 11275 to 11286 (VPYEEEKPEEIQ). Over residues 11686–11699 (KPKKKTTKTRTFKK) the composition is skewed to basic residues. Residues 11780-11792 (PTKDKTPKQKKTL) show a composition bias toward basic and acidic residues. The stretch at 11872–11905 (KTVLQPYQRTEMELPQRARRDSSFKQPVKLTPMK) is one TPR 4 repeat. Disordered regions lie at residues 12003 to 12201 (FKHS…ADTK), 12451 to 12471 (TLQV…KKPE), 12685 to 12767 (TVDD…LPGP), 12943 to 12971 (IDHE…KEKS), 13131 to 13154 (IKKK…ETRP), 13325 to 13349 (QSFE…KPKK), 13471 to 13492 (EEYE…KSHN), 13554 to 13576 (EADK…PLKK), 13702 to 13792 (KVQK…KSPD), 13891 to 13914 (EEVQ…KAKK), 13951 to 13994 (MKRK…DEPK), 14073 to 14094 (TTVP…RTKK), 14109 to 14322 (EEEA…QVTT), 14354 to 14377 (EYEP…RKVK), 14414 to 14448 (PLDS…ETPV), 14533 to 14566 (EPEI…KVKK), 14583 to 14720 (KVDL…SELP), and 14756 to 14789 (VEES…KSKK). Composition is skewed to basic and acidic residues over residues 12022–12035 (ESDH…ELLH), 12044–12054 (EKIETPDESRK), 12124–12134 (MERTSDIREES), 12183–12201 (LNLR…ADTK), 12457–12471 (TEHE…KKPE), and 12685–12709 (TVDD…KISE). Residues 12731 to 12741 (HDEDLQTDEYS) are compositionally biased toward acidic residues. Residues 12750–12760 (KSKKKSTKKQK) are compositionally biased toward basic residues. The segment covering 13141–13154 (GPKEQVFEITETRP) has biased composition (basic and acidic residues). Residues 13482 to 13492 (KKPKKKVKSHN) are compositionally biased toward basic residues. The stretch at 13566–13599 (QPIKKEKPLKKKKDVEYPVSLEAFDHTVKVVSEP) is one TPR 5 repeat. The span at 13733 to 13747 (LVKEDLDQPIERALE) shows a compositional bias: basic and acidic residues. The span at 13771 to 13781 (PKPKKISKPKS) shows a compositional bias: basic residues. Basic and acidic residues-rich tracts occupy residues 13893–13906 (VQEK…EKKA) and 13975–13984 (EDKPVEKISE). Over residues 14221 to 14240 (TVEKPLEALHTDSDLEKPDV) the composition is skewed to basic and acidic residues. The span at 14264-14274 (KISSEQPKQPS) shows a compositional bias: low complexity. Over residues 14282–14294 (VTEHDLKPEEEKP) the composition is skewed to basic and acidic residues. Over residues 14542-14554 (IEEHPEQSKEKLA) the composition is skewed to basic and acidic residues. Residues 14555 to 14564 (PKPKKTVRKV) are compositionally biased toward basic residues. Positions 14583–14599 (KVDLEKYEKVEMPEKPV) are enriched in basic and acidic residues. A compositionally biased stretch (low complexity) spans 14652–14662 (ETTVDTTDIPE). The segment covering 14664–14683 (TPTQTAQPEDTATAQITPSA) has biased composition (polar residues). Basic and acidic residues predominate over residues 14684–14697 (QEEKSTQDDTKDTI). Residues 14756 to 14771 (VEESQPIVEEVEDEEP) are compositionally biased toward acidic residues. A TPR 6 repeat occupies 14904 to 14936 (IPKTTDIGAIKDNGELSRNIEEAEEILKFKPHK). Disordered stretches follow at residues 14956-15208 (EKYI…VSVK), 15301-15329 (TRKK…IQPD), 15425-15448 (ISET…ETPK), 15578-15597 (IRVS…QFTV), 15697-15722 (EKPA…PKPE), 15825-15876 (EEPK…VEEP), 15951-15973 (ESQP…KAPI), and 16181-16206 (QEEE…KPLQ). 10 stretches are compositionally biased toward basic and acidic residues: residues 14967-14989 (EKTP…DVKL), 15024-15046 (ELKQ…KDGE), 15069-15080 (QIEHPEIPEKVK), 15088-15097 (KPKDKSKSEP), 15109-15139 (PKEE…EIKL), 15169-15179 (IEDKAIDDEKK), 15189-15198 (QPKEQEIAKE), 15316-15325 (VTLKEPKEEQ), 15425-15437 (ISET…KPIE), and 15578-15589 (IRVSESEPKPEE). A compositionally biased stretch (acidic residues) spans 15703–15716 (IVEEEEPVVTEPIE). A compositionally biased stretch (basic and acidic residues) spans 15951-15964 (ESQPEAVEDKEVSL). Residues 16183–16193 (EEYEEGEDIEE) show a composition bias toward acidic residues. An SH3 domain is found at 16409 to 16470 (ENLNIMYSIC…PAQYLMEPEE (62 aa)). Ig-like domains lie at 16501 to 16590 (PRFI…TELI), 16625 to 16719 (PTFS…ITLK), 16728 to 16811 (PQIL…ANLT), 16822 to 16916 (PPLF…VEVD), 16919 to 17001 (TFTK…STVE), 17007 to 17091 (PDFI…CELV), 17097 to 17180 (PEIV…AKLT), 17184 to 17270 (PLVD…TKLC), and 17277 to 17363 (PPVI…AEAS). A disulfide bond links Cys-16940 and Cys-16989. The Fibronectin type-III 1 domain occupies 17374-17467 (APGTPQPLEI…LSPPIRLVPK (94 aa)). 2 Ig-like domains span residues 17473–17558 (PSVQ…CRLK) and 17563–17653 (PVLE…CTVQ). Cysteines 17494 and 17542 form a disulfide. Fibronectin type-III domains follow at residues 17660-17755 (RPQS…TKKF), 17760-17861 (PPRG…TPPS), 17862-17958 (PPQN…THAS), and 17982-18078 (PPTG…AMTA). One copy of the TPR 7 repeat lies at 17694–17728 (LEKCDVQNNVWMKVSDFNKDIKSYAVQKLSMNAQY). Positions 17741–17771 (SEPTESDPVTITKKFEKPSPPRGPTTVSGMN) are disordered.

The protein belongs to the protein kinase superfamily. CAMK Ser/Thr protein kinase family. As to quaternary structure, interacts with Msp300; this interaction mediates the recruitment of Msp300 to the Z-disks. In terms of tissue distribution, expressed in the mesoderm at stage 11, several hours before myoblast fusion, and persists in most muscle cells, somatic, visceral and pharyngeal muscles and their precursors, until the third instar. Isoform A: Expressed in the indirect flight muscle (at protein level).

It is found in the cytoplasm. It localises to the nucleus. Its subcellular location is the chromosome. The protein localises to the myofibril. The protein resides in the sarcomere. It is found in the z line. Functionally, key component in the assembly and functioning of adult and embryonic striated muscles and muscle tendons. By providing connections at the level of individual microfilaments, it contributes to the fine balance of forces between the two halves of the sarcomere. The size and extensibility of the cross-links are the main determinants of sarcomere extensibility properties of muscle. In non-muscle cells, seems to play a role in chromosome condensation and chromosome segregation during mitosis. Might link the lamina network to chromatin or nuclear actin, or both during interphase. In Drosophila melanogaster (Fruit fly), this protein is Titin (sls).